We begin with the raw amino-acid sequence, 317 residues long: SKEPVSVVLPDAEHPAFPGRTRRPGNARAGSQVTGSREVGQMPAPLSRKIGQKKQQLAQSEQQQTPKEKLSSTPGLLRSIYFSSPEDRPARLGPEYFDQPAVTLARAFLGQVLVRRLADGTELRGRIVETEAYLGPEDEAAHSRGGRQTPRNRGMFMKPGTLYVYLIYGMYFCLNVSSQGAGACVLLRALEPLEGLETMRQLRNSLRKSTVGRSLKDRELCNGPSKLCQALARSKSFDQRDLAQDEAVWLEHGPLESSSPAVVAAAAGIGHAGEWTQKPLRFYVQGSPWVSVVDRVAEQMYQPQQTACSDXALIVQK.

A disordered region spans residues 1-76 (SKEPVSVVLP…KEKLSSTPGL (76 aa)). Residues 53–64 (KKQQLAQSEQQQ) are compositionally biased toward low complexity. Phosphoserine is present on residues S84 and S258.

Belongs to the DNA glycosylase MPG family. Binds MBD1. Binds SSBP1.

Its subcellular location is the cytoplasm. It is found in the mitochondrion matrix. It localises to the mitochondrion nucleoid. The protein localises to the nucleus. The enzyme catalyses Hydrolysis of alkylated DNA, releasing 3-methyladenine, 3-methylguanine, 7-methylguanine and 7-methyladenine.. Its activity is regulated as follows. Binding to SSBP1 in mitochondria inhibits glycosylase activity in the context of a single-stranded DNA (ssDNA), but not a double-stranded DNA (dsDNA) substrates. Its function is as follows. Hydrolysis of the deoxyribose N-glycosidic bond to excise 3-methyladenine, and 7-methylguanine from the damaged DNA polymer formed by alkylation lesions. This chain is DNA-3-methyladenine glycosylase (Mpg), found in Rattus norvegicus (Rat).